A 181-amino-acid polypeptide reads, in one-letter code: Probable pyruvoyl-dependent arginine decarboxylase (181 aa).

Ser-43 is subject to Pyruvic acid (Ser).

This sequence belongs to the PdaD family. Requires pyruvate as cofactor.

The enzyme catalyses L-arginine + H(+) = agmatine + CO2. This is Probable pyruvoyl-dependent arginine decarboxylase from Chlorobaculum parvum (strain DSM 263 / NCIMB 8327) (Chlorobium vibrioforme subsp. thiosulfatophilum).